Here is a 435-residue protein sequence, read N- to C-terminus: ATP-dependent protease ATPase subunit HslU (435 aa).

Residues Ile18, 60–65 (GVGKTE), Asp248, Glu313, and Arg385 each bind ATP.

This sequence belongs to the ClpX chaperone family. HslU subfamily. In terms of assembly, a double ring-shaped homohexamer of HslV is capped on each side by a ring-shaped HslU homohexamer. The assembly of the HslU/HslV complex is dependent on binding of ATP.

The protein resides in the cytoplasm. ATPase subunit of a proteasome-like degradation complex; this subunit has chaperone activity. The binding of ATP and its subsequent hydrolysis by HslU are essential for unfolding of protein substrates subsequently hydrolyzed by HslV. HslU recognizes the N-terminal part of its protein substrates and unfolds these before they are guided to HslV for hydrolysis. This is ATP-dependent protease ATPase subunit HslU from Sinorhizobium medicae (strain WSM419) (Ensifer medicae).